The sequence spans 130 residues: L-aspartate semialdehyde sulfurtransferase iron-sulfur subunit (130 aa).

4Fe-4S ferredoxin-type domains are found at residues 72–101 and 102–130; these read RPIH…FDET and WSLC…KLGE. [4Fe-4S] cluster-binding residues include Cys-81, Cys-84, Cys-87, Cys-91, Cys-111, Cys-114, Cys-117, and Cys-121.

As to quaternary structure, may form a complex with MA_1821. It depends on [4Fe-4S] cluster as a cofactor.

It participates in amino-acid biosynthesis. Functionally, required for O-acetylhomoserine sulfhydrylase (OAHS)-independent homocysteine (Hcy) biosynthesis. Together with MA_1821, catalyzes the condensation of sulfide with aspartate semialdehyde to generate homocysteine. May be involved in the reduction of the disulfide formed in MA_1821. The chain is L-aspartate semialdehyde sulfurtransferase iron-sulfur subunit from Methanosarcina acetivorans (strain ATCC 35395 / DSM 2834 / JCM 12185 / C2A).